The primary structure comprises 389 residues: Chromobox protein homolog 8 (389 aa).

Positions phenylalanine 11–proline 69 constitute a Chromo domain. A phosphoserine mark is found at serine 110 and serine 130. A disordered region spans residues leucine 124–phenylalanine 241. Residues glutamate 145–proline 189 show a composition bias toward basic and acidic residues. 6 positions are modified to phosphoserine: serine 191, serine 256, serine 265, serine 311, serine 332, and serine 352. The interval glycine 298–glutamine 327 is disordered.

As to quaternary structure, component of a PRC1-like complex. Interacts with RING1 RNF2, PCGF1, PCGF2, PCGF3, BMI1, PCGF5 and PCGF6. Interacts with MLLT3 and histone H3. Interacts with PHC2.

Its subcellular location is the nucleus. Its function is as follows. Component of a Polycomb group (PcG) multiprotein PRC1-like complex, a complex class required to maintain the transcriptionally repressive state of many genes, including Hox genes, throughout development. PcG PRC1 complex acts via chromatin remodeling and modification of histones; it mediates monoubiquitination of histone H2A 'Lys-119', rendering chromatin heritably changed in its expressibility. This is Chromobox protein homolog 8 (CBX8) from Homo sapiens (Human).